The primary structure comprises 2443 residues: NFX1-type zinc finger-containing protein 1 homolog (2443 aa).

Disordered regions lie at residues 212-339, 545-566, and 583-672; these read PHKQ…EGDH, SSDSGRQVLSESRGAGSSNVYG, and HRDN…FVSP. The span at 246-263 shows a compositional bias: low complexity; the sequence is ISISNSSPPGLSSVSPIP. The segment covering 275–294 has biased composition (pro residues); the sequence is PQPPGLSIPAPPGISLPTPP. The span at 297–310 shows a compositional bias: polar residues; the sequence is SLQNHQNDQFEQAH. The segment covering 311–322 has biased composition (low complexity); it reads STISRMSENSSS. Residues 545–564 are compositionally biased toward polar residues; the sequence is SSDSGRQVLSESRGAGSSNV. Composition is skewed to basic and acidic residues over residues 601 to 638 and 662 to 672; these read GEVHRRLDEQQQQRHEDESSRYRDDSRQSRRADDRRDQ and EHSRDDKFVSP. The UvrD-like helicase ATP-binding domain occupies 1040–1545; it reads MDESQRLAFC…MNLTISDKIV (506 aa). 1061 to 1068 contributes to the ATP binding site; that stretch reads GPPGTGKT. 4 NF-X1-type zinc fingers span residues 1769 to 1791, 1853 to 1873, 1912 to 1930, and 2027 to 2044; these read CGHVCERLCHPNMEEEHLQRCLY, CGHACAAKCGEECTLVSECSQ, CPHKCAEICGQPCTVECME, and CGHTCSAKCGESCPPCKA.

It belongs to the ZNFX1 family. As to quaternary structure, interacts with ego-1, csr-1, wago-1 and prg-1. Interacts with wago-4; the interaction promotes the transmission of epigenetic information across generations. Expressed in germs cells. Not expressed in somatic tissues.

It localises to the cytoplasm. The protein localises to the perinuclear region. The protein resides in the cytoplasmic granule. The enzyme catalyses ATP + H2O = ADP + phosphate + H(+). In terms of biological role, epigenetic inheritance factor which, in association with the Argonaute protein wago-4, mediates small RNA-directed transgenerational epigenetic inheritance and thus balances the transgenerational inheritance of epigenetic information. Specifically, maintains a balanced production of small RNAs by preventing the spread of epigenetic signals towards the 5'-end of target mRNAs. Plays a role in small RNA-induced gene silencing in the germline. The chain is NFX1-type zinc finger-containing protein 1 homolog from Caenorhabditis elegans.